The chain runs to 209 residues: Thymidine kinase (209 aa).

Residues 9–16 and 88–91 contribute to the ATP site; these read AAMNAGKS and DEAQ. The active-site Proton acceptor is the Glu89. The Zn(2+) site is built by Cys146, Cys148, Cys183, and His186.

This sequence belongs to the thymidine kinase family. In terms of assembly, homotetramer.

It localises to the cytoplasm. It carries out the reaction thymidine + ATP = dTMP + ADP + H(+). This chain is Thymidine kinase, found in Legionella pneumophila (strain Lens).